The sequence spans 638 residues: DNA repair protein rhp41 (638 aa).

The protein belongs to the XPC family.

It localises to the nucleus. Functionally, has a role in the nucleotide excision repair (NER) pathway. Acts in both transcription-coupled repair (TCR) which removes damage from the transcribed strand of active genes and in global genome repair (GGR) which removes damage in untranscribed DNA. Involved in the repair of UV-induced damages where it is involved in the removal of cyclobutane pyrimidine dimers (CPDs). The chain is DNA repair protein rhp41 (rhp41) from Schizosaccharomyces pombe (strain 972 / ATCC 24843) (Fission yeast).